We begin with the raw amino-acid sequence, 88 residues long: Small ribosomal subunit protein uS15 (88 aa).

It belongs to the universal ribosomal protein uS15 family. In terms of assembly, part of the 30S ribosomal subunit. Forms a bridge to the 50S subunit in the 70S ribosome, contacting the 23S rRNA.

One of the primary rRNA binding proteins, it binds directly to 16S rRNA where it helps nucleate assembly of the platform of the 30S subunit by binding and bridging several RNA helices of the 16S rRNA. Its function is as follows. Forms an intersubunit bridge (bridge B4) with the 23S rRNA of the 50S subunit in the ribosome. The chain is Small ribosomal subunit protein uS15 from Mycoplasma mycoides subsp. mycoides SC (strain CCUG 32753 / NCTC 10114 / PG1).